The chain runs to 175 residues: Peptide deformylase (175 aa).

Fe cation-binding residues include Cys-99 and His-141. Residue Glu-142 is part of the active site. Fe cation is bound at residue His-145.

The protein belongs to the polypeptide deformylase family. Fe(2+) is required as a cofactor.

The catalysed reaction is N-terminal N-formyl-L-methionyl-[peptide] + H2O = N-terminal L-methionyl-[peptide] + formate. In terms of biological role, removes the formyl group from the N-terminal Met of newly synthesized proteins. Requires at least a dipeptide for an efficient rate of reaction. N-terminal L-methionine is a prerequisite for activity but the enzyme has broad specificity at other positions. This chain is Peptide deformylase, found in Rickettsia typhi (strain ATCC VR-144 / Wilmington).